A 299-amino-acid chain; its full sequence is tRNA dimethylallyltransferase (299 aa).

11–18 (GPTAVGKT) serves as a coordination point for ATP. 13-18 (TAVGKT) contacts substrate. The interaction with substrate tRNA stretch occupies residues 36-39 (DSQQ).

This sequence belongs to the IPP transferase family. As to quaternary structure, monomer. Requires Mg(2+) as cofactor.

The enzyme catalyses adenosine(37) in tRNA + dimethylallyl diphosphate = N(6)-dimethylallyladenosine(37) in tRNA + diphosphate. In terms of biological role, catalyzes the transfer of a dimethylallyl group onto the adenine at position 37 in tRNAs that read codons beginning with uridine, leading to the formation of N6-(dimethylallyl)adenosine (i(6)A). The chain is tRNA dimethylallyltransferase from Streptococcus pyogenes serotype M18 (strain MGAS8232).